The sequence spans 70 residues: uncharacterized protein (70 aa).

The N-terminal stretch at Met1 to Ala16 is a signal peptide.

This is an uncharacterized protein from Orgyia pseudotsugata (Douglas-fir tussock moth).